We begin with the raw amino-acid sequence, 409 residues long: MDNLVERFLRYVSFETQSNSSVTQCPSTSGQIVLAEQLKNELIELELVDVELDENGYVMARLPSNVEHDVPAIGLIAHMDTAPDASGKDVVPQIVENYQGGDIALGIGDEVLSPIQYPDLRKLLGHNIITTDGTTLLGADNKAGIAEIITAIAHLKANPDIKHGDICIGFTPDEEIGRGANLFNVEKFGAKWAYTIDGGPVGELEFENFNATSADVICHGVNVHPGTAKNKMINSMNIAAQFQLMMPTEETPECTEHYEGFYHLKSMEPSVAKTELGYIIRDFDRKGLEQRKVFMQSKVDELNSSLTKGRVELILTDCYFNMREMVEPHQHIIELAKEAMIACDVKPDIKPIRGGTDGARLSFMGLPCPNIFTGGYNFHGIHEFITIEGMEQAVRVIVKLAEKTSEKYQ.

H78 contributes to the Zn(2+) binding site. D80 is an active-site residue. D140 serves as a coordination point for Zn(2+). E174 functions as the Proton acceptor in the catalytic mechanism. Zn(2+)-binding residues include E175, D197, and H379.

The protein belongs to the peptidase M20B family. Zn(2+) is required as a cofactor.

The protein localises to the cytoplasm. The catalysed reaction is Release of the N-terminal residue from a tripeptide.. Cleaves the N-terminal amino acid of tripeptides. This chain is Peptidase T, found in Photobacterium profundum (strain SS9).